The following is a 143-amino-acid chain: Hemoglobin subunit alpha (143 aa).

One can recognise a Globin domain in the interval 3–143 (KLSGEDKANV…TMRLCISKYR (141 aa)). An O2-binding site is contributed by histidine 60. Histidine 89 contributes to the heme b binding site.

The protein belongs to the globin family. In terms of assembly, heterotetramer of two alpha chains and two beta chains. Red blood cells.

Involved in oxygen transport from the lung to the various peripheral tissues. In Ambystoma mexicanum (Axolotl), this protein is Hemoglobin subunit alpha (HBA).